The following is a 278-amino-acid chain: Complement C1q tumor necrosis factor-related protein 6 (278 aa).

The signal sequence occupies residues 1–46 (MQWLRVRESPGEATGHRVTMGTAALGPVWAALLLFLLMCEIPMVEL). Residue Asn-91 is glycosylated (N-linked (GlcNAc...) asparagine). The Collagen-like domain maps to 97–138 (GDKGDPGPMGLPGYMGREGPQGEPGPQGSKGDKGEMGSPGAP). The segment at 99 to 135 (KGDPGPMGLPGYMGREGPQGEPGPQGSKGDKGEMGSP) is disordered. The C1q domain maps to 139 to 259 (CQKRFFAFSV…KRQRENAIYS (121 aa)).

It is found in the secreted. The chain is Complement C1q tumor necrosis factor-related protein 6 (C1QTNF6) from Homo sapiens (Human).